Here is a 319-residue protein sequence, read N- to C-terminus: Probable casein kinase II subunit alpha homolog (319 aa).

One can recognise a Protein kinase domain in the interval 37–316 (YQIYQRMGRG…ADECLRHPLF (280 aa)). ATP is bound by residues 43 to 51 (MGRGKYSEV) and Lys64. Asp151 functions as the Proton acceptor in the catalytic mechanism.

The protein belongs to the protein kinase superfamily. Ser/Thr protein kinase family. CK2 subfamily. As to quaternary structure, tetramer composed of two alpha chains, one beta chain and one beta' chain.

The enzyme catalyses L-seryl-[protein] + ATP = O-phospho-L-seryl-[protein] + ADP + H(+). It catalyses the reaction L-threonyl-[protein] + ATP = O-phospho-L-threonyl-[protein] + ADP + H(+). In terms of biological role, catalytic subunit of a constitutively active serine/threonine-protein kinase complex that phosphorylates a large number of substrates containing acidic residues C-terminal to the phosphorylated serine or threonine. This is Probable casein kinase II subunit alpha homolog (CKA1) from Encephalitozoon cuniculi (strain GB-M1) (Microsporidian parasite).